We begin with the raw amino-acid sequence, 221 residues long: 7-cyano-7-deazaguanine synthase (221 aa).

12-22 (FSGGQDSTTCL) contacts ATP. Zn(2+) contacts are provided by Cys190, Cys199, Cys202, and Cys205.

The protein belongs to the QueC family. Homodimer. Requires Zn(2+) as cofactor.

The enzyme catalyses 7-carboxy-7-deazaguanine + NH4(+) + ATP = 7-cyano-7-deazaguanine + ADP + phosphate + H2O + H(+). Its pathway is purine metabolism; 7-cyano-7-deazaguanine biosynthesis. In terms of biological role, catalyzes the ATP-dependent conversion of 7-carboxy-7-deazaguanine (CDG) to 7-cyano-7-deazaguanine (preQ(0)). This chain is 7-cyano-7-deazaguanine synthase, found in Clostridium novyi (strain NT).